Reading from the N-terminus, the 56-residue chain is Chymotrypsin inhibitor (56 aa).

Intrachain disulfides connect Cys3-Cys36, Cys12-Cys32, Cys16-Cys28, Cys20-Cys56, and Cys38-Cys50. In terms of domain architecture, TIL spans 3–56 (CGPNEVFNTCGSACAPTCAQPKTRICTMQCRIGCQCQEGFLRNGEGACVLPENC).

Belongs to the serine protease inhibitor-like (TIL domain-containing) family.

The protein localises to the secreted. Its function is as follows. Chymotrypsin and cathepsin G inhibitor. The protein is Chymotrypsin inhibitor of Apis mellifera (Honeybee).